A 424-amino-acid polypeptide reads, in one-letter code: Enolase (424 aa).

A (2R)-2-phosphoglycerate-binding site is contributed by glutamine 163. Residue glutamate 205 is the Proton donor of the active site. Mg(2+) is bound by residues aspartate 242, glutamate 285, and aspartate 312. (2R)-2-phosphoglycerate contacts are provided by lysine 337, arginine 366, serine 367, and lysine 388. Lysine 337 functions as the Proton acceptor in the catalytic mechanism.

It belongs to the enolase family. It depends on Mg(2+) as a cofactor.

The protein localises to the cytoplasm. It is found in the secreted. Its subcellular location is the cell surface. It catalyses the reaction (2R)-2-phosphoglycerate = phosphoenolpyruvate + H2O. Its pathway is carbohydrate degradation; glycolysis; pyruvate from D-glyceraldehyde 3-phosphate: step 4/5. Catalyzes the reversible conversion of 2-phosphoglycerate (2-PG) into phosphoenolpyruvate (PEP). It is essential for the degradation of carbohydrates via glycolysis. This Roseobacter denitrificans (strain ATCC 33942 / OCh 114) (Erythrobacter sp. (strain OCh 114)) protein is Enolase.